The chain runs to 361 residues: Mitogen-activated protein kinase 14 (361 aa).

Positions 32–316 constitute a Protein kinase domain; sequence YVPIKPIGRG…VSDALLHPYM (285 aa). ATP contacts are provided by residues 38 to 46 and Lys-61; that span reads IGRGAYGVV. Asp-158 acts as the Proton acceptor in catalysis. Thr-188 carries the phosphothreonine modification. Positions 188–190 match the TXY motif; sequence TEY. Tyr-190 bears the Phosphotyrosine mark. Thr-193 carries the post-translational modification Phosphothreonine.

Belongs to the protein kinase superfamily. CMGC Ser/Thr protein kinase family. MAP kinase subfamily. In terms of assembly, interacts with MKK3. Dually phosphorylated on Thr-188 and Tyr-190, which activates the enzyme.

The enzyme catalyses L-seryl-[protein] + ATP = O-phospho-L-seryl-[protein] + ADP + H(+). The catalysed reaction is L-threonyl-[protein] + ATP = O-phospho-L-threonyl-[protein] + ADP + H(+). With respect to regulation, activated by threonine and tyrosine phosphorylation. The polypeptide is Mitogen-activated protein kinase 14 (MPK14) (Arabidopsis thaliana (Mouse-ear cress)).